Here is a 179-residue protein sequence, read N- to C-terminus: Large ribosomal subunit protein uL6 (179 aa).

The protein belongs to the universal ribosomal protein uL6 family. Part of the 50S ribosomal subunit.

Functionally, this protein binds to the 23S rRNA, and is important in its secondary structure. It is located near the subunit interface in the base of the L7/L12 stalk, and near the tRNA binding site of the peptidyltransferase center. This is Large ribosomal subunit protein uL6 from Geobacter sulfurreducens (strain ATCC 51573 / DSM 12127 / PCA).